A 419-amino-acid chain; its full sequence is L-rhamnose isomerase (419 aa).

Residues histidine 262, aspartate 294, and aspartate 296 each contribute to the Mn(2+) site.

Belongs to the rhamnose isomerase family. Homotetramer. The cofactor is Mn(2+).

The protein localises to the cytoplasm. The catalysed reaction is L-rhamnopyranose = L-rhamnulose. It functions in the pathway carbohydrate degradation; L-rhamnose degradation; glycerone phosphate from L-rhamnose: step 1/3. Catalyzes the interconversion of L-rhamnose and L-rhamnulose. This chain is L-rhamnose isomerase, found in Salmonella typhi.